An 862-amino-acid chain; its full sequence is MTDTQQKIKAVLLTVLMVTSVFAATIAFSGAAAASERGAGDSYTTGPTDGNQDNVDSAGNVGAGAVVFQGEDDIEGEFADGNGDTVGIGELQKVSGDNEGILLESPIPQDQPTGRYTANPGVEGTEGVTLQTPRITDLEIQNSDEGDVTGSILQANNDNTAEILVDYNYDEAEDLELTVEDEDGLEVTEEILADGASETVNTNVNNDDHPNPAADGDRDDSFDAGFTINPSNVDEGEYTITVEGVEDLDFGDASETATVEITTDQTASLSLDSDEVTQGEDLGFDIENSPEGNFHAVVIEESEFRDSASASNYAKVFRNVGDTSDRGLVGEDADGNTVAVAPGDADSLESIDYAYGIVEIDGGTGVGSVETQYLDDSSIDIDLYEAANGDYTDNNAHVNDINLVTDDTYETDDEQDFDVLEGDLTIDSPSGTYVTGSEVDVNGTASEGIDDVAIYARDNNDYELVEIDSEETISVDGDDTFSEEDISLSGGDLGGNDILGLPGTYRIGVVDVEDADSNSNGTVDDSLTTSEFNSGVSSAESLRVTDTELNGTFITYNGQISSDDNQIDVEGQAPGKDNLVIAFVDSRGNAVATDISVDDDDTFSEDDISISALSEGTVTAHIISSGRDNLFGDGVSDSSSGFASLIEEEYASGSSTGDQVRSRILENSVDDTASDDLIVNEQFRLADGLTTVESVNSPVEANGTIEIEGTTNRKPDDNTITVELLDDEDESVTVDSTDEWSSDGQWSVSLDLSDENVEPGNFTVEADDGDNTDRQSVQIVEAGSLEEEQPATDTPEPDTDTPEPATDTPEPATDTPEPDTDTPEPDTETEEATTEATGPGFTAAIALIALVAAALLAVRRDN.

The N-terminal stretch at 1–34 is a signal peptide; it reads MTDTQQKIKAVLLTVLMVTSVFAATIAFSGAAAA. Disordered regions lie at residues 35-60, 101-126, and 200-220; these read SERG…SAGN, ILLE…EGTE, and VNTN…DRDD. Polar residues predominate over residues 43–57; sequence YTTGPTDGNQDNVDS. Over residues 206–220 the composition is skewed to basic and acidic residues; sequence NDDHPNPAADGDRDD. Residues asparagine 442, asparagine 520, asparagine 550, asparagine 702, and asparagine 761 are each glycosylated (N-linked (GlcNAc...) asparagine). The interval 752–838 is disordered; it reads LSDENVEPGN…TEEATTEATG (87 aa). A compositionally biased stretch (acidic residues) spans 784–801; sequence SLEEEQPATDTPEPDTDT. Positions 802-815 are enriched in low complexity; it reads PEPATDTPEPATDT. Positions 816–833 are enriched in acidic residues; it reads PEPDTDTPEPDTETEEAT. Residues 838–858 traverse the membrane as a helical segment; that stretch reads GPGFTAAIALIALVAAALLAV. The short motif at 839–841 is the PGF sorting signal element; the sequence is PGF.

It belongs to the halobacterial S-layer protein family. Post-translationally, glycosylated. In terms of processing, cleaved by the archaeosortase ArtA at the C-terminus, with removal of a short hydrophobic segment. Lipidation.

The protein localises to the secreted. It is found in the cell wall. The protein resides in the S-layer. Its subcellular location is the cell membrane. S-layer protein. The S-layer is a paracrystalline mono-layered assembly of proteins which coat the surface of the cell. The protein is Cell surface glycoprotein of Haloarcula japonica (strain ATCC 49778 / DSM 6131 / JCM 7785 / NBRC 101032 / NCIMB 13157 / TR-1).